The primary structure comprises 285 residues: 2-oxoglutarate synthase subunit KorB (285 aa).

Heterotetramer of the KorA, KorB, KorC and KorD subunits.

It carries out the reaction 2 oxidized [2Fe-2S]-[ferredoxin] + 2-oxoglutarate + CoA = succinyl-CoA + 2 reduced [2Fe-2S]-[ferredoxin] + CO2 + H(+). This Methanothermobacter marburgensis (strain ATCC BAA-927 / DSM 2133 / JCM 14651 / NBRC 100331 / OCM 82 / Marburg) (Methanobacterium thermoautotrophicum) protein is 2-oxoglutarate synthase subunit KorB (korB).